Consider the following 272-residue polypeptide: Shikimate dehydrogenase (NADP(+)) (272 aa).

Shikimate contacts are provided by residues 14–16 (SKS) and Thr61. Catalysis depends on Lys65, which acts as the Proton acceptor. NADP(+) is bound at residue Glu77. The shikimate site is built by Asn86 and Asp102. Residues 126-130 (GAGGA), 149-154 (NRTASR), and Met213 each bind NADP(+). Shikimate is bound at residue Tyr215. Residue Gly237 coordinates NADP(+).

Belongs to the shikimate dehydrogenase family. In terms of assembly, homodimer.

The catalysed reaction is shikimate + NADP(+) = 3-dehydroshikimate + NADPH + H(+). The protein operates within metabolic intermediate biosynthesis; chorismate biosynthesis; chorismate from D-erythrose 4-phosphate and phosphoenolpyruvate: step 4/7. In terms of biological role, involved in the biosynthesis of the chorismate, which leads to the biosynthesis of aromatic amino acids. Catalyzes the reversible NADPH linked reduction of 3-dehydroshikimate (DHSA) to yield shikimate (SA). The protein is Shikimate dehydrogenase (NADP(+)) of Salmonella choleraesuis (strain SC-B67).